Here is a 315-residue protein sequence, read N- to C-terminus: Beta-ketoacyl-[acyl-carrier-protein] synthase III (315 aa).

Catalysis depends on residues Cys-115 and His-244. Positions 245 to 249 (QANAR) are ACP-binding. Residue Asn-274 is part of the active site.

Belongs to the thiolase-like superfamily. FabH family. In terms of assembly, homodimer.

The protein resides in the cytoplasm. The enzyme catalyses malonyl-[ACP] + acetyl-CoA + H(+) = 3-oxobutanoyl-[ACP] + CO2 + CoA. It participates in lipid metabolism; fatty acid biosynthesis. In terms of biological role, catalyzes the condensation reaction of fatty acid synthesis by the addition to an acyl acceptor of two carbons from malonyl-ACP. Catalyzes the first condensation reaction which initiates fatty acid synthesis and may therefore play a role in governing the total rate of fatty acid production. Possesses both acetoacetyl-ACP synthase and acetyl transacylase activities. Its substrate specificity determines the biosynthesis of branched-chain and/or straight-chain of fatty acids. The sequence is that of Beta-ketoacyl-[acyl-carrier-protein] synthase III from Rubrobacter xylanophilus (strain DSM 9941 / JCM 11954 / NBRC 16129 / PRD-1).